Reading from the N-terminus, the 979-residue chain is DNA ligase 4 (979 aa).

The interval 1 to 39 is disordered; that stretch reads MDSDEIMPDEEHPNVPVGDEESDIDEKYPNRPRNHSPTL. Residues Glu320, Lys322, Leu323, Arg327, Glu389, Phe430, Glu490, Lys495, Lys512, and Lys514 each coordinate ATP. The active-site N6-AMP-lysine intermediate is Lys322. Glu389 serves as a coordination point for Mg(2+). Residue Glu490 coordinates Mg(2+). 2 consecutive BRCT domains span residues 721–814 and 867–965; these read PSGH…PDFL and LQES…RFQP.

Belongs to the ATP-dependent DNA ligase family. Mg(2+) serves as cofactor.

Its subcellular location is the nucleus. It carries out the reaction ATP + (deoxyribonucleotide)n-3'-hydroxyl + 5'-phospho-(deoxyribonucleotide)m = (deoxyribonucleotide)n+m + AMP + diphosphate.. DNA ligase involved in DNA non-homologous end joining (NHEJ); required for double-strand break (DSB) repair. The chain is DNA ligase 4 (lig4) from Aspergillus fumigatus (strain ATCC MYA-4609 / CBS 101355 / FGSC A1100 / Af293) (Neosartorya fumigata).